We begin with the raw amino-acid sequence, 178 residues long: Photosystem I assembly protein Ycf4 (178 aa).

The next 2 membrane-spanning stretches (helical) occupy residues 19 to 39 (FLVA…SLSS) and 61 to 81 (LVMG…WYVI).

The protein belongs to the Ycf4 family.

It localises to the cellular thylakoid membrane. Its function is as follows. Seems to be required for the assembly of the photosystem I complex. The sequence is that of Photosystem I assembly protein Ycf4 from Synechococcus sp. (strain CC9902).